The sequence spans 81 residues: MKTLLLTLVVVTIVCLDLGYTMTCCNQQSSQPKTTTPCAESSCYKKTWKDHRGTIIERGCGCPNVKPGIDLMCCRTDECNN.

An N-terminal signal peptide occupies residues 1–21 (MKTLLLTLVVVTIVCLDLGYT). Disulfide bonds link Cys24–Cys43, Cys38–Cys60, Cys62–Cys73, and Cys74–Cys79.

It belongs to the three-finger toxin family. Short-chain subfamily. Type I alpha-neurotoxin sub-subfamily. In terms of tissue distribution, expressed by the venom gland.

The protein resides in the secreted. Its function is as follows. Binds to muscle nicotinic acetylcholine receptor (nAChR) and inhibit acetylcholine from binding to the receptor, thereby impairing neuromuscular transmission. This chain is Short neurotoxin 2, found in Tropidechis carinatus (Australian rough-scaled snake).